The following is a 472-amino-acid chain: Phosphoenolpyruvate carboxykinase (ATP), glycosomal (472 aa).

An ATP-binding site is contributed by 221-228 (GLSGTGKT).

This sequence belongs to the phosphoenolpyruvate carboxykinase (ATP) family. As to quaternary structure, homodimer.

The protein resides in the glycosome. The enzyme catalyses oxaloacetate + ATP = phosphoenolpyruvate + ADP + CO2. The protein operates within carbohydrate biosynthesis; gluconeogenesis. The sequence is that of Phosphoenolpyruvate carboxykinase (ATP), glycosomal (PEPCK) from Trypanosoma cruzi.